Here is a 433-residue protein sequence, read N- to C-terminus: Ribosome biogenesis protein WDR12 homolog (433 aa).

M1 is modified (N-acetylmethionine). Residues 12–96 (LHVKFVTKLD…ERTLEIEYIR (85 aa)) are ubiquitin-like (UBL) domain. 7 WD repeats span residues 108 to 146 (LHDDWVSAVNGSSPRFILTGCYDGLGRVWSSAGSCSHIL), 148 to 191 (GHSG…SVDS), 203 to 242 (GHKASVQSVSAQKSGNMVCSSSWDCTINLWNTNESTSEGE), 270 to 308 (GHTQCVSSVVWPEHDVIYSSSWDHSVRRWDVETGKDSLN), 310 to 350 (FCGK…TSAP), 356 to 396 (SHSS…PLSV), and 399 to 433 (THNDKVLSADWWKGESVVSGGADSNLRISSGIAIS). The tract at residues 238–263 (TSEGESVSVKKRKGNNQAEESQSEGE) is disordered.

Belongs to the WD repeat WDR12/YTM1 family. As to quaternary structure, interacts with PES. Interacts with BOP1.

The protein resides in the nucleus. It is found in the nucleolus. It localises to the nucleoplasm. Its function is as follows. Required for maturation of ribosomal RNAs and formation of the large ribosomal subunit. This chain is Ribosome biogenesis protein WDR12 homolog, found in Arabidopsis thaliana (Mouse-ear cress).